The chain runs to 363 residues: S-adenosylmethionine:tRNA ribosyltransferase-isomerase (363 aa).

This sequence belongs to the QueA family. Monomer.

The protein localises to the cytoplasm. The enzyme catalyses 7-aminomethyl-7-carbaguanosine(34) in tRNA + S-adenosyl-L-methionine = epoxyqueuosine(34) in tRNA + adenine + L-methionine + 2 H(+). It functions in the pathway tRNA modification; tRNA-queuosine biosynthesis. Functionally, transfers and isomerizes the ribose moiety from AdoMet to the 7-aminomethyl group of 7-deazaguanine (preQ1-tRNA) to give epoxyqueuosine (oQ-tRNA). The polypeptide is S-adenosylmethionine:tRNA ribosyltransferase-isomerase (Haemophilus influenzae (strain PittEE)).